A 397-amino-acid chain; its full sequence is Serpin B10 (397 aa).

Residues C68 and C395 are joined by a disulfide bond. The Nuclear localization signal signature appears at 74-77 (KKRK).

It belongs to the serpin family. Ov-serpin subfamily. Expressed specifically in myeloid cells and the bone marrow.

The protein localises to the nucleus. Its subcellular location is the cytoplasm. Protease inhibitor that may play a role in the regulation of protease activities during hematopoiesis and apoptosis induced by TNF. May regulate protease activities in the cytoplasm and in the nucleus. In Homo sapiens (Human), this protein is Serpin B10 (SERPINB10).